We begin with the raw amino-acid sequence, 553 residues long: Solute carrier family 22 member 12 (553 aa).

Residues 10–30 (VGGLGRFQLFQTVALVTPILW) traverse the membrane as a helical segment. A glycan (N-linked (GlcNAc...) asparagine) is linked at Asn-56. 11 helical membrane-spanning segments follow: residues 146-166 (PMAQ…CGHA), 182-202 (LVSV…YCLF), 204-224 (FLLA…LMEW), 232-252 (LVMT…GSVA), 260-280 (MLQL…WWLP), 351-371 (IISM…ALDL), 378-398 (IFLL…GSLL), 412-432 (FLVL…GMGV), 435-455 (SALA…ITIF), 466-486 (MTAV…GPLV), and 495-515 (WMPL…ALLL). The residue at position 534 (Ser-534) is a Phosphoserine. Position 542 is a phosphothreonine (Thr-542).

This sequence belongs to the major facilitator (TC 2.A.1) superfamily. Organic cation transporter (TC 2.A.1.19) family. As to quaternary structure, interacts with PDZK1. In terms of processing, N-glycosylated. Detected in kidney (at protein level). Detected in kidney cortex, in proximal tubules.

It localises to the apical cell membrane. It catalyses the reaction urate(out) + (S)-lactate(in) = urate(in) + (S)-lactate(out). It carries out the reaction nicotinate(in) + urate(out) = nicotinate(out) + urate(in). The catalysed reaction is urate(out) + n chloride(in) = urate(in) + n chloride(out). The enzyme catalyses orotate(out) + nicotinate(in) = orotate(in) + nicotinate(out). In terms of biological role, electroneutral antiporter that translocates urate across the apical membrane of proximal tubular cells in exchange for monovalent organic or inorganic anions. Involved in renal reabsorption of urate and helps maintaining blood levels of uric acid. Mediates urate uptake by an exchange with organic anions such as (S)-lactate and nicotinate, and inorganic anion Cl(-). Other inorganic anions such as Br(-), I(-) and NO3(-) may also act as counteranions that exchange for urate. Also mediates orotate tubular uptake coupled with nicotinate efflux and to a lesser extent with lactate efflux, therefore displaying a potential role in orotate renal reabsorption. Orotate transport is Cl(-)-dependent. The polypeptide is Solute carrier family 22 member 12 (Mus musculus (Mouse)).